We begin with the raw amino-acid sequence, 97 residues long: Putative septation protein SpoVG (97 aa).

It belongs to the SpoVG family.

Could be involved in septation. The sequence is that of Putative septation protein SpoVG from Borrelia garinii subsp. bavariensis (strain ATCC BAA-2496 / DSM 23469 / PBi) (Borreliella bavariensis).